The primary structure comprises 159 residues: NADH-quinone oxidoreductase subunit B (159 aa).

[4Fe-4S] cluster-binding residues include C36, C37, C102, and C132.

This sequence belongs to the complex I 20 kDa subunit family. As to quaternary structure, NDH-1 is composed of 14 different subunits. Subunits NuoB, C, D, E, F, and G constitute the peripheral sector of the complex. Requires [4Fe-4S] cluster as cofactor.

The protein localises to the cell inner membrane. The catalysed reaction is a quinone + NADH + 5 H(+)(in) = a quinol + NAD(+) + 4 H(+)(out). NDH-1 shuttles electrons from NADH, via FMN and iron-sulfur (Fe-S) centers, to quinones in the respiratory chain. The immediate electron acceptor for the enzyme in this species is believed to be ubiquinone. Couples the redox reaction to proton translocation (for every two electrons transferred, four hydrogen ions are translocated across the cytoplasmic membrane), and thus conserves the redox energy in a proton gradient. The sequence is that of NADH-quinone oxidoreductase subunit B from Acidovorax ebreus (strain TPSY) (Diaphorobacter sp. (strain TPSY)).